The primary structure comprises 295 residues: Ethanolamine ammonia-lyase small subunit (295 aa).

Positions 207, 228, and 258 each coordinate adenosylcob(III)alamin.

This sequence belongs to the EutC family. The basic unit is a heterodimer which dimerizes to form tetramers. The heterotetramers trimerize; 6 large subunits form a core ring with 6 small subunits projecting outwards. Adenosylcob(III)alamin is required as a cofactor.

The protein resides in the bacterial microcompartment. The enzyme catalyses ethanolamine = acetaldehyde + NH4(+). The protein operates within amine and polyamine degradation; ethanolamine degradation. In terms of biological role, catalyzes the deamination of various vicinal amino-alcohols to oxo compounds. Allows this organism to utilize ethanolamine as the sole source of nitrogen and carbon in the presence of external vitamin B12. The polypeptide is Ethanolamine ammonia-lyase small subunit (Escherichia coli O157:H7).